Reading from the N-terminus, the 372-residue chain is Queuine tRNA-ribosyltransferase (372 aa).

The active-site Proton acceptor is Asp-90. Substrate is bound by residues 90–94 (DSGGF), Asp-144, Gln-193, and Gly-220. Positions 251 to 257 (GVGTPED) are RNA binding. Asp-270 functions as the Nucleophile in the catalytic mechanism. The interval 275–279 (TRNAR) is RNA binding; important for wobble base 34 recognition. Positions 308, 310, 313, and 339 each coordinate Zn(2+).

It belongs to the queuine tRNA-ribosyltransferase family. As to quaternary structure, homodimer. Within each dimer, one monomer is responsible for RNA recognition and catalysis, while the other monomer binds to the replacement base PreQ1. Requires Zn(2+) as cofactor.

It catalyses the reaction 7-aminomethyl-7-carbaguanine + guanosine(34) in tRNA = 7-aminomethyl-7-carbaguanosine(34) in tRNA + guanine. It functions in the pathway tRNA modification; tRNA-queuosine biosynthesis. In terms of biological role, catalyzes the base-exchange of a guanine (G) residue with the queuine precursor 7-aminomethyl-7-deazaguanine (PreQ1) at position 34 (anticodon wobble position) in tRNAs with GU(N) anticodons (tRNA-Asp, -Asn, -His and -Tyr). Catalysis occurs through a double-displacement mechanism. The nucleophile active site attacks the C1' of nucleotide 34 to detach the guanine base from the RNA, forming a covalent enzyme-RNA intermediate. The proton acceptor active site deprotonates the incoming PreQ1, allowing a nucleophilic attack on the C1' of the ribose to form the product. After dissociation, two additional enzymatic reactions on the tRNA convert PreQ1 to queuine (Q), resulting in the hypermodified nucleoside queuosine (7-(((4,5-cis-dihydroxy-2-cyclopenten-1-yl)amino)methyl)-7-deazaguanosine). This is Queuine tRNA-ribosyltransferase from Sulfurimonas denitrificans (strain ATCC 33889 / DSM 1251) (Thiomicrospira denitrificans (strain ATCC 33889 / DSM 1251)).